The primary structure comprises 429 residues: tRNA(Ile2) 2-agmatinylcytidine synthetase TiaS (429 aa).

Positions 271-343 (VRGKVIKKYW…LTLNLEKFYP (73 aa)) form a DNA-binding region, OB.

This sequence belongs to the TiaS family.

It is found in the cytoplasm. It catalyses the reaction cytidine(34) in tRNA(Ile2) + agmatine + ATP + H2O = 2-agmatinylcytidine(34) in tRNA(Ile2) + AMP + 2 phosphate + 2 H(+). In terms of biological role, ATP-dependent agmatine transferase that catalyzes the formation of 2-agmatinylcytidine (agm2C) at the wobble position (C34) of tRNA(Ile2), converting the codon specificity from AUG to AUA. In Thermococcus sibiricus (strain DSM 12597 / MM 739), this protein is tRNA(Ile2) 2-agmatinylcytidine synthetase TiaS.